The primary structure comprises 714 residues: MFNTHSVELDWGGRPLKLETGKVARQADGAVIATYGETVVMATVVSAKTPKEGIDFLPLTVNYQEKTYAAGRIPGGYFKREGRPSEKETLVSRLIDRPIRPLFADGYRCDTQVIVTTLSHDMENDPDIVAMVAASAALTLSGVPFMGPVGAARVAFVNNEFILNPTLDEMVDTQLDLVVAGTATAVLMVESEAKELPEEIMLGAVMFGHKHFQPVLKAIIELAEQAAKEPRDVVATVNADLEKEILGIVEQDLRKAYSIPVKQDRYAAVGAAKDKVLEHFFPEGIEPRYEKLRVLDVFKDLEAKIVRWNILDTGRRIDGRDLKTVRPIVAEVGVLPRAHGSALFTRGETQALVVTTLGTGEDEQYIDSLAGTYKETFLLHYNFPPFSVGETGRIGSPGRREIGHGKLAWRAIHPVLPAHHEFPYTLRVVSEITESNGSSSMATVCGSSLALMDAGVPLKRPTAGIAMGLILEGDRFAVLSDILGDEDHLGDMDFKVAGTEKGVTSLQMDIKIAGITEEIMKVALTQAKDGRMHILGEMAKALTAARAELGEHAPRIEVLQIPTDKIRDVIGTGGKVIREIVEKTGAKINIEDDGTVKVASANGESIRAAIKWIKSITSEPEVGQIYDGTVVKVMEFGAFVNFFGPKDGLVHISQLAASRVQKTSDVVKEGDKVKVKLLGLDDRGKVRLSMKAVDQTTGEDLEAKQKAENAPAAE.

Aspartate 487 and aspartate 493 together coordinate Mg(2+). The 60-residue stretch at 554-613 (PRIEVLQIPTDKIRDVIGTGGKVIREIVEKTGAKINIEDDGTVKVASANGESIRAAIKWI) folds into the KH domain. The S1 motif domain occupies 623-691 (GQIYDGTVVK…DRGKVRLSMK (69 aa)).

The protein belongs to the polyribonucleotide nucleotidyltransferase family. Mg(2+) serves as cofactor.

It is found in the cytoplasm. The enzyme catalyses RNA(n+1) + phosphate = RNA(n) + a ribonucleoside 5'-diphosphate. Functionally, involved in mRNA degradation. Catalyzes the phosphorolysis of single-stranded polyribonucleotides processively in the 3'- to 5'-direction. The polypeptide is Polyribonucleotide nucleotidyltransferase (Afipia carboxidovorans (strain ATCC 49405 / DSM 1227 / KCTC 32145 / OM5) (Oligotropha carboxidovorans)).